Consider the following 524-residue polypeptide: Mediator of RNA polymerase II transcription subunit 8 (524 aa).

N-acetylmethionine is present on M1. Residues 137–162 are a coiled coil; the sequence is MQIERLKARMDMIAAACENAERVLAD. Disordered regions lie at residues 291 to 315 and 474 to 524; these read VPSP…LMQL and MMQT…QNPQ. Low complexity-rich tracts occupy residues 295–315 and 474–505; these read QHQI…LMQL and MMQT…TNQQ. Residues 506–524 are compositionally biased toward polar residues; the sequence is SLQPNNMMQNAQQRHQNPQ.

The protein belongs to the Mediator complex subunit 8 family. Component of the Mediator complex.

It is found in the nucleus. Functionally, component of the Mediator complex, a coactivator involved in the regulated transcription of nearly all RNA polymerase II-dependent genes. Mediator functions as a bridge to convey information from gene-specific regulatory proteins to the basal RNA polymerase II transcription machinery. The Mediator complex, having a compact conformation in its free form, is recruited to promoters by direct interactions with regulatory proteins and serves for the assembly of a functional preinitiation complex with RNA polymerase II and the general transcription factors. Regulator of both plant defense and flowering time. Involved in pollen tube growth. The chain is Mediator of RNA polymerase II transcription subunit 8 (MED8) from Arabidopsis thaliana (Mouse-ear cress).